The chain runs to 149 residues: Transcriptional repressor NrdR (149 aa).

The segment at 3-34 (CPFCSATDTKVIDSRLVADGHQVRRRRECAEC) is a zinc-finger region. The ATP-cone domain maps to 49-139 (PRVVKQDGSR…VYRAFEDVSE (91 aa)).

It belongs to the NrdR family. Requires Zn(2+) as cofactor.

Negatively regulates transcription of bacterial ribonucleotide reductase nrd genes and operons by binding to NrdR-boxes. This Shewanella woodyi (strain ATCC 51908 / MS32) protein is Transcriptional repressor NrdR.